The primary structure comprises 550 residues: Coiled-coil domain-containing protein 102A (550 aa).

Disordered stretches follow at residues 1-69 (MSHG…DGDW) and 138-247 (GARR…ATEE). Phosphoserine occurs at positions 12, 26, and 28. Positions 37-61 (SLPPTPPSGTPSPGPPPALPLPPAP) are enriched in pro residues. Positions 72-161 (REELRLRELE…ARGRELARLR (90 aa)) form a coiled coil. Composition is skewed to basic and acidic residues over residues 138–159 (GARR…ELAR) and 169–188 (QTRD…DVGS). Coiled-coil stretches lie at residues 263–396 (QKVL…RRQT) and 427–518 (KLKK…NAPL). Disordered regions lie at residues 472 to 497 (DELD…QSEN) and 509 to 550 (LRRQ…IQVA). The segment covering 530 to 550 (EEAEDGTSDLDEDEDLQIQVA) has biased composition (acidic residues). Ser-537 is modified (phosphoserine).

This Homo sapiens (Human) protein is Coiled-coil domain-containing protein 102A (CCDC102A).